The primary structure comprises 143 residues: Hemoglobin subunit alpha (143 aa).

At Ser2 the chain carries N-acetylserine. The 142-residue stretch at 2–143 (SLSDKDKAAV…VALALAEKYR (142 aa)) folds into the Globin domain. Residue His60 participates in O2 binding. Residue His89 participates in heme b binding.

This sequence belongs to the globin family. As to quaternary structure, heterotetramer of two alpha chains and two beta chains. As to expression, red blood cells.

Involved in oxygen transport from the lung to the various peripheral tissues. This Artedidraco orianae (Barbeled plunderfish) protein is Hemoglobin subunit alpha (hba).